An 860-amino-acid polypeptide reads, in one-letter code: MQEQYRPEEIESKVQLHWDEKRTFEVTEDESKEKYYCLSMLPYPSGRLHMGHVRNYTIGDVIARYQRMLGKNVLQPIGWDAFGLPAEGAAVKNNTAPAPWTYDNIAYMKNQLKMLGFGYDWSRELATCTPEYYRWEQKFFTELYKKGLVYKKTSAVNWCPNDQTVLANEQVIDGCCWRCDTKVERKEIPQWFIKITAYADELLNDLDKLDHWPDTVKTMQRNWIGRSEGVEITFNVNDYDNTLTVYTTRPDTFMGCTYLAVAAGHPLAQKAAENNPELAAFIDECRNTKVAEAEMATMEKKGVDTGFKAVHPLTGEEIPVWAANFVLMEYGTGAVMAVPGHDQRDYEFASKYGLNIKPVILAADGSEPDLSQQALTEKGVLFNSGEFNGLDHEAAFNAIADKLTAMGVGERKVNYRLRDWGVSRQRYWGAPIPMVTLEDGTVMPTPDDQLPVILPEDVVMDGITSPIKADPEWAKTTVNGMPALRETDTFDTFMESSWYYARYTCPQYKEGMLDSEAANYWLPVDIYIGGIEHAIMHLLYFRFFHKLMRDAGMVNSDEPAKQLLCQGMVLADAFYYVGENGERNWVSPVDAIVERDEKGRIVKAKDAAGHELVYTGMSKMSKSKNNGIDPQVMVERYGADTVRLFMMFASPADMTLEWQESGVEGANRFLKRIWKLVYEHTAKGDVAALNVDALTEDQKALRRDVHKTIAKVTDDIGRRQTFNTAIAAIMELMNKLAKAPTDGEQDRALMQEALLAVVRMLNPFTPHICFTLWQELKGEGDIDNAPWPVADEKAMVEDSTLVVVQVNGKVRAKITVPVDATEEQVRERAGQEHLVAKYLDGVTVRKVIYVPGKLLNLVVG.

Positions 42 to 52 (PYPSGRLHMGH) match the 'HIGH' region motif. The short motif at 619-623 (KMSKS) is the 'KMSKS' region element. An ATP-binding site is contributed by K622.

Belongs to the class-I aminoacyl-tRNA synthetase family.

It is found in the cytoplasm. The catalysed reaction is tRNA(Leu) + L-leucine + ATP = L-leucyl-tRNA(Leu) + AMP + diphosphate. The protein is Leucine--tRNA ligase of Escherichia coli (strain ATCC 8739 / DSM 1576 / NBRC 3972 / NCIMB 8545 / WDCM 00012 / Crooks).